The primary structure comprises 480 residues: Protein nucleotidyltransferase YdiU (480 aa).

ATP-binding residues include Gly-87, Gly-89, Arg-90, Lys-110, Asp-122, Gly-123, Arg-173, and Arg-180. Asp-249 functions as the Proton acceptor in the catalytic mechanism. 2 residues coordinate Mg(2+): Asn-250 and Asp-259. Asp-259 lines the ATP pocket.

This sequence belongs to the SELO family. Mg(2+) is required as a cofactor. It depends on Mn(2+) as a cofactor.

It catalyses the reaction L-seryl-[protein] + ATP = 3-O-(5'-adenylyl)-L-seryl-[protein] + diphosphate. The catalysed reaction is L-threonyl-[protein] + ATP = 3-O-(5'-adenylyl)-L-threonyl-[protein] + diphosphate. The enzyme catalyses L-tyrosyl-[protein] + ATP = O-(5'-adenylyl)-L-tyrosyl-[protein] + diphosphate. It carries out the reaction L-histidyl-[protein] + UTP = N(tele)-(5'-uridylyl)-L-histidyl-[protein] + diphosphate. It catalyses the reaction L-seryl-[protein] + UTP = O-(5'-uridylyl)-L-seryl-[protein] + diphosphate. The catalysed reaction is L-tyrosyl-[protein] + UTP = O-(5'-uridylyl)-L-tyrosyl-[protein] + diphosphate. Functionally, nucleotidyltransferase involved in the post-translational modification of proteins. It can catalyze the addition of adenosine monophosphate (AMP) or uridine monophosphate (UMP) to a protein, resulting in modifications known as AMPylation and UMPylation. This chain is Protein nucleotidyltransferase YdiU, found in Anoxybacillus flavithermus (strain DSM 21510 / WK1).